A 220-amino-acid chain; its full sequence is Small ribosomal subunit protein uS5 (220 aa).

A disordered region spans residues Met1–Lys39. The span at Asp13–Lys39 shows a compositional bias: basic and acidic residues. The S5 DRBM domain occupies Tyr42–Val105.

Belongs to the universal ribosomal protein uS5 family. In terms of assembly, part of the 30S ribosomal subunit. Contacts proteins S4 and S8.

With S4 and S12 plays an important role in translational accuracy. In terms of biological role, located at the back of the 30S subunit body where it stabilizes the conformation of the head with respect to the body. In Mycobacterium bovis (strain ATCC BAA-935 / AF2122/97), this protein is Small ribosomal subunit protein uS5.